Here is a 233-residue protein sequence, read N- to C-terminus: Lipid A 4'-phosphatase (233 aa).

Residue Met1 is a topological domain, cytoplasmic. Residues 2–22 form a helical membrane-spanning segment; it reads LLFWMWWALLAVFRAFPGIDI. Over 23–60 the chain is Extracellular; sequence YFSQLFFVGADCDATAAAGNICGGFPYRDVAAFDLLRT. Residues 61-81 traverse the membrane as a helical segment; that stretch reads VFFRLPYVVAIVMVWKLVECY. Residues 82–94 are Cytoplasmic-facing; it reads QQHGATFNAERAQ. Residues 95 to 115 form a helical membrane-spanning segment; it reads KLKVALGTLLIGPVLLVNVVL. Topologically, residues 116–149 are extracellular; it reads KEHWGRPRPIQTDIFGGALHFAEAGSLAGKCVSN. A helical transmembrane segment spans residues 150–170; that stretch reads CSFVSGEAASAGWLFCLLLFV. The Cytoplasmic segment spans residues 171-176; sequence PKSLRY. The helical transmembrane segment at 177-197 threads the bilayer; sequence AVAAPLAAISILTPAMRLSFG. At 198–200 the chain is on the extracellular side; it reads AHY. Residues 201–221 form a helical membrane-spanning segment; sequence LSDVVLGWLSSLVVFAALLAL. At 222–233 the chain is on the cytoplasmic side; it reads TESQQHQKNSEI.

The protein belongs to the lipid A LpxF 4'-phosphatase family.

The protein resides in the cell inner membrane. It functions in the pathway bacterial outer membrane biogenesis; LPS lipid A biosynthesis. Functionally, removes the 4'-phosphate moiety from lipid IV(A) (a tetraacylated precursor of lipid A). This chain is Lipid A 4'-phosphatase, found in Rhizobium leguminosarum.